A 426-amino-acid chain; its full sequence is Histidine--tRNA ligase (426 aa).

Belongs to the class-II aminoacyl-tRNA synthetase family.

It is found in the cytoplasm. It carries out the reaction tRNA(His) + L-histidine + ATP = L-histidyl-tRNA(His) + AMP + diphosphate + H(+). The protein is Histidine--tRNA ligase (hisS) of Thermoplasma volcanium (strain ATCC 51530 / DSM 4299 / JCM 9571 / NBRC 15438 / GSS1).